We begin with the raw amino-acid sequence, 96 residues long: MEQAPEDQGPQREPYNEWTIEILEELKREAVRHFPRPWLHDLGQHIYNNYGDTWEGVEAIIRILQQLLFIHFRIGCHHSRIGILRQRRGGNGASRS.

Residues 1–42 (MEQAPEDQGPQREPYNEWTIEILEELKREAVRHFPRPWLHDL) are homooligomerization. Ser79, Ser94, and Ser96 each carry phosphoserine; by host.

Belongs to the HIV-1 VPR protein family. In terms of assembly, homooligomer, may form homodimer. Interacts with p6-gag region of the Pr55 Gag precursor protein through a (Leu-X-X)4 motif near the C-terminus of the P6gag protein. Interacts with host UNG. May interact with host RAD23A/HHR23A. Interacts with host VPRBP/DCAF1, leading to hijack the CUL4A-RBX1-DDB1-DCAF1/VPRBP complex, mediating ubiquitination of host proteins such as TERT and ZGPAT and arrest of the cell cycle in G2 phase. In terms of processing, phosphorylated on several residues by host. These phosphorylations regulate VPR activity for the nuclear import of the HIV-1 pre-integration complex.

It localises to the virion. Its subcellular location is the host nucleus. The protein localises to the host extracellular space. During virus replication, may deplete host UNG protein, and incude G2-M cell cycle arrest. Acts by targeting specific host proteins for degradation by the 26S proteasome, through association with the cellular CUL4A-DDB1 E3 ligase complex by direct interaction with host VPRPB/DCAF-1. Cell cycle arrest reportedly occurs within hours of infection and is not blocked by antiviral agents, suggesting that it is initiated by the VPR carried into the virion. Additionally, VPR induces apoptosis in a cell cycle dependent manner suggesting that these two effects are mechanistically linked. Detected in the serum and cerebrospinal fluid of AIDS patient, VPR may also induce cell death to bystander cells. Its function is as follows. During virus entry, plays a role in the transport of the viral pre-integration (PIC) complex to the host nucleus. This function is crucial for viral infection of non-dividing macrophages. May act directly at the nuclear pore complex, by binding nucleoporins phenylalanine-glycine (FG)-repeat regions. The sequence is that of Protein Vpr from Human immunodeficiency virus type 1 group M subtype K (isolate 97ZR-EQTB11) (HIV-1).